Consider the following 267-residue polypeptide: Elsinochrome reductase 1 (267 aa).

NADP(+) is bound by residues Ile-26, Asp-72, Asn-99, and Arg-132. Ser-149 (proton donor) is an active-site residue. NADP(+)-binding residues include Tyr-163, Lys-167, Ile-196, and Thr-198. Residue Tyr-163 is the Proton acceptor of the active site. Lys-167 (lowers pKa of active site Tyr) is an active-site residue.

This sequence belongs to the short-chain dehydrogenases/reductases (SDR) family.

Reductase; part of the gene cluster that mediates the biosynthesis of elsinochromes, pigments consisting of at least four interconvertible tautomers (A, B, C and D) that have a core phenolic quinone to which various side chains are attached and which play an important role in fungal pathogenesis. The non-reducing polyketide synthase PKS1 was proposed to iteratively catalyze decarboxylation between acetyl-CoA and malonyl-CoA subunits for polyketide chain elongation. The released polyketide undergoes cyclization to form an aromatic ring, and proceeds via serial modification steps to produce the heptaketide back- bone of elsinochrome. As elsinochrome has a symmetrical structure, two identical heptaketides are fused to form a core 1,2-dihydrobenzo-perylene ring structure, which can then be successively modified to produce the various derivatives of elsinochrome. Some of these reactions may be cooperatively carried out, at least in part, by the products of RDT1, OXR1 and PKS1. PRF1, embedded within the elsinochrome cluster possibly functions to stabilize some of the biosynthetic enzymes required for elsinochrome production. As prefoldin is a hexamer containing 2 a and 4 b subunits, additional prefoldin subunits, whose coding genes may not immediately link to the elsinochrome biosynthetic gene cluster, are required to fulfill the chaperone function. In addition, no methyltransferase-coding gene exists within the biosynthetic gene cluster, even though elsinochrome has four methyl groups at positions C3, C7, C8 and C12. Apparently, the identified gene cluster does not contain the entire entourage of genes responsible for elsinochrome biosynthesis. Once elsinochrome is synthesized, it must be exported outside the fungal cells, which is probably accomplished by the ECT1 transporter, to avoid toxicity. In Elsinoe fawcettii (Citrus scab fungus), this protein is Elsinochrome reductase 1.